A 437-amino-acid chain; its full sequence is UDP-N-acetylmuramate--L-alanine ligase (437 aa).

Residue Gly108 to Ser114 coordinates ATP.

The protein belongs to the MurCDEF family.

Its subcellular location is the cytoplasm. It carries out the reaction UDP-N-acetyl-alpha-D-muramate + L-alanine + ATP = UDP-N-acetyl-alpha-D-muramoyl-L-alanine + ADP + phosphate + H(+). It functions in the pathway cell wall biogenesis; peptidoglycan biosynthesis. Cell wall formation. In Staphylococcus haemolyticus (strain JCSC1435), this protein is UDP-N-acetylmuramate--L-alanine ligase.